Consider the following 247-residue polypeptide: DNA repair protein RecO (247 aa).

Belongs to the RecO family.

Functionally, involved in DNA repair and RecF pathway recombination. This Brucella abortus (strain 2308) protein is DNA repair protein RecO.